The following is a 259-amino-acid chain: Ubiquinone/menaquinone biosynthesis C-methyltransferase UbiE (259 aa).

S-adenosyl-L-methionine is bound by residues T82, D103, and N131–A132.

It belongs to the class I-like SAM-binding methyltransferase superfamily. MenG/UbiE family.

It carries out the reaction a 2-demethylmenaquinol + S-adenosyl-L-methionine = a menaquinol + S-adenosyl-L-homocysteine + H(+). The enzyme catalyses a 2-methoxy-6-(all-trans-polyprenyl)benzene-1,4-diol + S-adenosyl-L-methionine = a 5-methoxy-2-methyl-3-(all-trans-polyprenyl)benzene-1,4-diol + S-adenosyl-L-homocysteine + H(+). It participates in quinol/quinone metabolism; menaquinone biosynthesis; menaquinol from 1,4-dihydroxy-2-naphthoate: step 2/2. Its pathway is cofactor biosynthesis; ubiquinone biosynthesis. Functionally, methyltransferase required for the conversion of demethylmenaquinol (DMKH2) to menaquinol (MKH2) and the conversion of 2-polyprenyl-6-methoxy-1,4-benzoquinol (DDMQH2) to 2-polyprenyl-3-methyl-6-methoxy-1,4-benzoquinol (DMQH2). The polypeptide is Ubiquinone/menaquinone biosynthesis C-methyltransferase UbiE (Agrobacterium fabrum (strain C58 / ATCC 33970) (Agrobacterium tumefaciens (strain C58))).